The sequence spans 388 residues: Chorismate synthase (388 aa).

NADP(+) is bound by residues Arg-39 and Arg-45. FMN is bound by residues 132 to 134, 251 to 252, Gly-296, 311 to 315, and Arg-337; these read RSS, NA, and KPIPT.

In terms of assembly, homotetramer. The cofactor is FMNH2.

The enzyme catalyses 5-O-(1-carboxyvinyl)-3-phosphoshikimate = chorismate + phosphate. It participates in metabolic intermediate biosynthesis; chorismate biosynthesis; chorismate from D-erythrose 4-phosphate and phosphoenolpyruvate: step 7/7. Its function is as follows. Catalyzes the anti-1,4-elimination of the C-3 phosphate and the C-6 proR hydrogen from 5-enolpyruvylshikimate-3-phosphate (EPSP) to yield chorismate, which is the branch point compound that serves as the starting substrate for the three terminal pathways of aromatic amino acid biosynthesis. This reaction introduces a second double bond into the aromatic ring system. This is Chorismate synthase from Staphylococcus aureus.